We begin with the raw amino-acid sequence, 309 residues long: Aspartate carbamoyltransferase catalytic subunit (309 aa).

2 residues coordinate carbamoyl phosphate: arginine 58 and threonine 59. L-aspartate is bound at residue lysine 86. Carbamoyl phosphate is bound by residues arginine 108, histidine 136, and glutamine 139. The L-aspartate site is built by arginine 170 and arginine 224. 2 residues coordinate carbamoyl phosphate: glycine 266 and proline 267.

It belongs to the aspartate/ornithine carbamoyltransferase superfamily. ATCase family. Heterododecamer (2C3:3R2) of six catalytic PyrB chains organized as two trimers (C3), and six regulatory PyrI chains organized as three dimers (R2).

The catalysed reaction is carbamoyl phosphate + L-aspartate = N-carbamoyl-L-aspartate + phosphate + H(+). Its pathway is pyrimidine metabolism; UMP biosynthesis via de novo pathway; (S)-dihydroorotate from bicarbonate: step 2/3. In terms of biological role, catalyzes the condensation of carbamoyl phosphate and aspartate to form carbamoyl aspartate and inorganic phosphate, the committed step in the de novo pyrimidine nucleotide biosynthesis pathway. The protein is Aspartate carbamoyltransferase catalytic subunit of Campylobacter curvus (strain 525.92).